The sequence spans 127 residues: Fluoride-specific ion channel FluC (127 aa).

A run of 4 helical transmembrane segments spans residues 4–24, 37–57, 68–88, and 96–116; these read SLLVIAIGASLGAWLRWLLGM, TVVANMVGGYIIGLAIAFLAA, LIITGFCGGLTTFSTFSAETV, and LLWALGSISLHVVGSLAMTAA. The Na(+) site is built by Gly-75 and Thr-78.

The protein belongs to the fluoride channel Fluc/FEX (TC 1.A.43) family.

It localises to the cell inner membrane. It carries out the reaction fluoride(in) = fluoride(out). Na(+) is not transported, but it plays an essential structural role and its presence is essential for fluoride channel function. Its function is as follows. Fluoride-specific ion channel. Important for reducing fluoride concentration in the cell, thus reducing its toxicity. In Pseudomonas syringae pv. maculicola, this protein is Fluoride-specific ion channel FluC.